A 247-amino-acid polypeptide reads, in one-letter code: Eukaryotic translation initiation factor 6-1 (247 aa).

The protein belongs to the eIF-6 family. Monomer. Associates with the 60S ribosomal subunit.

Its subcellular location is the cytoplasm. It localises to the nucleus. The protein localises to the nucleolus. Binds to the 60S ribosomal subunit and prevents its association with the 40S ribosomal subunit to form the 80S initiation complex in the cytoplasm. May also be involved in ribosome biogenesis. The chain is Eukaryotic translation initiation factor 6-1 from Arabidopsis thaliana (Mouse-ear cress).